Here is a 128-residue protein sequence, read N- to C-terminus: Large ribosomal subunit protein eL8 (128 aa).

This sequence belongs to the eukaryotic ribosomal protein eL8 family. In terms of assembly, part of the 50S ribosomal subunit. Probably part of the RNase P complex.

The protein localises to the cytoplasm. Its function is as follows. Multifunctional RNA-binding protein that recognizes the K-turn motif in ribosomal RNA, the RNA component of RNase P, box H/ACA, box C/D and box C'/D' sRNAs. In Staphylothermus marinus (strain ATCC 43588 / DSM 3639 / JCM 9404 / F1), this protein is Large ribosomal subunit protein eL8.